The chain runs to 283 residues: Pantothenate synthetase (283 aa).

Residue 30-37 (MGNLHSGH) participates in ATP binding. His37 acts as the Proton donor in catalysis. Gln61 is a binding site for (R)-pantoate. Gln61 contacts beta-alanine. 149–152 (GEKD) provides a ligand contact to ATP. Residue Gln155 coordinates (R)-pantoate. ATP-binding positions include Val178 and 186 to 189 (LSSR).

It belongs to the pantothenate synthetase family. Homodimer.

It localises to the cytoplasm. It catalyses the reaction (R)-pantoate + beta-alanine + ATP = (R)-pantothenate + AMP + diphosphate + H(+). The protein operates within cofactor biosynthesis; (R)-pantothenate biosynthesis; (R)-pantothenate from (R)-pantoate and beta-alanine: step 1/1. Catalyzes the condensation of pantoate with beta-alanine in an ATP-dependent reaction via a pantoyl-adenylate intermediate. In Pseudomonas savastanoi pv. phaseolicola (strain 1448A / Race 6) (Pseudomonas syringae pv. phaseolicola (strain 1448A / Race 6)), this protein is Pantothenate synthetase.